We begin with the raw amino-acid sequence, 325 residues long: Lactonase drp35 (325 aa).

Ca(2+) is bound by residues glutamate 46, threonine 108, glycine 110, aspartate 128, threonine 131, tyrosine 133, aspartate 136, asparagine 183, aspartate 234, and serine 235. Residue aspartate 234 is the Proton donor of the active site.

The protein belongs to the SMP-30/CGR1 family. The cofactor is Ca(2+).

The protein localises to the cytoplasm. Exhibits lactonase activity. Acts in cells with perturbed membrane integrity and is possibly related to the membrane homeostasis. The sequence is that of Lactonase drp35 (drp35) from Staphylococcus epidermidis (strain ATCC 12228 / FDA PCI 1200).